Consider the following 434-residue polypeptide: ATP-dependent protease ATPase subunit HslU (434 aa).

ATP-binding positions include valine 18, 60-65 (GVGKTE), aspartate 247, glutamate 312, and arginine 384.

This sequence belongs to the ClpX chaperone family. HslU subfamily. A double ring-shaped homohexamer of HslV is capped on each side by a ring-shaped HslU homohexamer. The assembly of the HslU/HslV complex is dependent on binding of ATP.

The protein resides in the cytoplasm. Its function is as follows. ATPase subunit of a proteasome-like degradation complex; this subunit has chaperone activity. The binding of ATP and its subsequent hydrolysis by HslU are essential for unfolding of protein substrates subsequently hydrolyzed by HslV. HslU recognizes the N-terminal part of its protein substrates and unfolds these before they are guided to HslV for hydrolysis. The sequence is that of ATP-dependent protease ATPase subunit HslU from Rhodopseudomonas palustris (strain BisB18).